The sequence spans 96 residues: YcgL domain-containing protein Csal_1462 (96 aa).

In terms of domain architecture, YcgL spans 4–88 (RLCEIFKSPR…ARESYLLDLY (85 aa)).

The chain is YcgL domain-containing protein Csal_1462 from Chromohalobacter salexigens (strain ATCC BAA-138 / DSM 3043 / CIP 106854 / NCIMB 13768 / 1H11).